Reading from the N-terminus, the 1218-residue chain is NACHT, LRR and PYD domains-containing protein 1 allele 2 (1218 aa).

Positions 1–61 (MEESQSKQES…SLPGWSSTSK (61 aa)) are disordered. Polar residues predominate over residues 7-29 (KQESNTRVAQHGSQQDVDPTFQT). The region spanning 175–484 (QLVIIEGAAG…EFFAAMSYIL (310 aa)) is the NACHT domain. 181–188 (GAAGIGKS) contacts ATP. LRR repeat units lie at residues 343 to 364 (KERNTIIDFNLIGSIPVLLTLC), 673 to 693 (NLEELDLSGNPLSYSAVRSLC), and 730 to 750 (RLAELDLRLNDLGDNGVRQLC). The segment covering 799–815 (TMPTENTDGEESLTSSK) has biased composition (polar residues). The interval 799–842 (TMPTENTDGEESLTSSKQQQQQSGDKHMEPLGTDDDFWGPSGPV) is disordered. Residues 835–968 (FWGPSGPVST…HFAVLENPSF (134 aa)) form a ZU5 region. Residues 835–1118 (FWGPSGPVST…LRPALPRMAS (284 aa)) form the FIIND domain. The interval 969–1118 (SPMGVLLRMI…LRPALPRMAS (150 aa)) is UPA. In terms of domain architecture, CARD spans 1122-1211 (DAPALLHFVD…HLIMDLLEKS (90 aa)).

Belongs to the NLRP family. Interacts (via LRR repeats) with BCL2 and BCL2L1 (via the loop between motifs BH4 and BH3). Interacts with NOD2; this interaction is enhanced in the presence of muramyl dipeptide (MDP) and increases IL1B release. Interacts with EIF2AK2/PKR; this interaction requires EIF2AK2 activity, is accompanied by EIF2AK2 autophosphorylation and promotes inflammasome assembly in response to danger-associated signals. Interacts with MEFV; this interaction targets Nlrp1a to degradation by autophagy, hence preventing excessive IL1B- and IL18-mediated inflammation. Interacts with DPP9; leading to inhibit activation of the inflammasome. DPP9 acts via formation of a ternary complex, composed of a DPP9 homodimer, one full-length NLRP1 protein, and one cleaved C-terminus of Nlrp1a (NACHT, LRR and PYD domains-containing protein 1a, C-terminus). Interacts with DPP8; leading to inhibit activation of the inflammasome, probably via formation of a ternary complex with DPP8. In terms of assembly, interacts with the C-terminal part of Nlrp1a (NACHT, LRR and PYD domains-containing protein 1a, C-terminus) in absence of pathogens and other damage-associated signals. As to quaternary structure, interacts with the N-terminal part of Nlrp1a (NACHT, LRR and PYD domains-containing protein 1a, N-terminus) in absence of pathogens and other damage-associated signals. Homomultimer; forms the Nlrp1a inflammasome polymeric complex, a filament composed of homopolymers of this form in response to pathogens and other damage-associated signals. The Nlrp1a inflammasome polymeric complex directly recruits pro-caspase-1 (proCASP1) independently of PYCARD/ASC. Interacts (via CARD domain) with CASP1 (via CARD domain); leading to CASP1 activation. Post-translationally, autocatalytically cleaved. Autocatalytic cleavage in FIIND region occurs constitutively, prior to activation signals, and is required for inflammasome activity (IL1B release), possibly by facilitating CASP1 binding. Both N- and C-terminal parts remain associated non-covalently. (Microbial infection) Cleavage by B.anthracis lethal toxin (LT) endopeptidase promotes ubiquitination and degradation of the N-terminal part, releasing the cleaved C-terminal part of the protein (NACHT, LRR and PYD domains-containing protein 1a, C-terminus), which polymerizes and forms the Nlrp1a inflammasome. In terms of processing, ubiquitinated in response to pathogen-associated signals, leading to its degradation by the proteasome and subsequent release of the cleaved C-terminal part of the protein (NACHT, LRR and PYD domains-containing protein 1a, C-terminus), which polymerizes and forms the Nlrp1a inflammasome.

The protein localises to the cytoplasm. Its subcellular location is the cytosol. It is found in the nucleus. It localises to the inflammasome. Activated by cleavage by B.anthracis lethal toxin (LT) endopeptidase. Cleavage by LT promotes ubiquitination and degradation of the N-terminal part, releasing the cleaved C-terminal part of the protein (NACHT, LRR and PYD domains-containing protein 1a, C-terminus), which polymerizes and forms the Nlrp1a inflammasome. Nlrp1a inflammasome is inhibited by DPP8 and DPP9, which sequester the C-terminal fragment of Nlrp1a (NACHT, LRR and PYD domains-containing protein 1a, C-terminus) in a ternary complex, thereby preventing Nlrp1a oligomerization and activation. Nlrp1a inflammasome is weakly activated by Val-boroPro (Talabostat, PT-100), an inhibitor of dipeptidyl peptidases DPP8 and DPP9. Val-boroPro relieves inhibition of DPP8 and/or DPP9 by promoting disruption of the ternary complex, releasing its C-terminal part from autoinhibition. Weakly activated by Toxoplasma gondii. Its function is as follows. Acts as the sensor component of the Nlrp1a inflammasome, which mediates inflammasome activation in response to various pathogen-associated signals, leading to subsequent pyroptosis. Inflammasomes are supramolecular complexes that assemble in the cytosol in response to pathogens and other damage-associated signals and play critical roles in innate immunity and inflammation. Acts as a recognition receptor (PRR): recognizes specific pathogens and other damage-associated signals, such as B.anthracis lethal toxin (LT) or Val-boroPro inhibitor, and mediates the formation of the inflammasome polymeric complex. In response to pathogen-associated signals, the N-terminal part of Nlrp1a is degraded by the proteasome, releasing the cleaved C-terminal part of the protein (NACHT, LRR and PYD domains-containing protein 1a, C-terminus), which polymerizes to initiate the formation of the inflammasome complex: the inflammasome directly recruits pro-caspase-1 (proCASP1) independently of PYCARD/ASC and promotes caspase-1 (CASP1) activation, which subsequently cleaves and activates inflammatory cytokines IL1B and IL18 and gasdermin-D (GSDMD), leading to pyroptosis. In the absence of GSDMD expression, the Nlrp1a inflammasome is able to recruit and activate CASP8, leading to activation of gasdermin-E (GSDME). In terms of biological role, constitutes the precursor of the Nlrp1a inflammasome, which mediates autoproteolytic processing within the FIIND domain to generate the N-terminal and C-terminal parts, which are associated non-covalently in absence of pathogens and other damage-associated signals. Regulatory part that prevents formation of the Nlrp1a inflammasome: in absence of pathogens and other damage-associated signals, interacts with the C-terminal part of Nlrp1a (NACHT, LRR and PYD domains-containing protein 1a, C-terminus), preventing activation of the Nlrp1a inflammasome. In response to pathogen-associated signals, this part is ubiquitinated by the N-end rule pathway and degraded by the proteasome, releasing the cleaved C-terminal part of the protein, which polymerizes and forms the Nlrp1a inflammasome. Functionally, constitutes the active part of the Nlrp1a inflammasome. In absence of pathogens and other damage-associated signals, interacts with the N-terminal part of Nlrp1a (NACHT, LRR and PYD domains-containing protein 1a, N-terminus), preventing activation of the Nlrp1a inflammasome. In response to pathogen-associated signals, the N-terminal part of Nlrp1a is degraded by the proteasome, releasing this form, which polymerizes to form the Nlrp1a inflammasome complex: the Nlrp1a inflammasome complex then directly recruits pro-caspase-1 (proCASP1) and promotes caspase-1 (CASP1) activation, leading to gasdermin-D (GSDMD) cleavage and subsequent pyroptosis. The protein is NACHT, LRR and PYD domains-containing protein 1 allele 2 of Rattus norvegicus (Rat).